A 1363-amino-acid chain; its full sequence is Homeobox protein 13 (1363 aa).

Positions 15–73 (FVMEQIQQQQQQQQQQQQQQQQQQQQQQQQQQQQLQQQQQQQQQQQQQQQQQQQQQQQN) form a coiled coil. Disordered stretches follow at residues 66-96 (QQQQQQQNPKMNNQPNETRLPSPPLLNSTVP), 120-177 (SQHA…INGS), 308-437 (INGT…YHGG), 621-731 (LNSP…QHQQ), 765-818 (HHHH…PQHS), 857-911 (SINS…SNSI), 1001-1137 (QNYN…TLIN), 1166-1202 (NFINNNSNNNNNMEIDDDDEDGIDGIEGEDDSKKRMR), and 1270-1341 (ISFG…TLIS). Residues 73–96 (NPKMNNQPNETRLPSPPLLNSTVP) are compositionally biased toward polar residues. Residues 132 to 147 (SLNSSNNNNNNNFNNS) show a composition bias toward low complexity. Over residues 148 to 158 (RPTFSSCSGNS) the composition is skewed to polar residues. 2 stretches are compositionally biased toward low complexity: residues 159–177 (NNTTTTTTTTTTTNPINGS) and 315–326 (SNHSNNNNNNNN). Positions 327–339 (NHHHHHHHHHQKR) are enriched in basic residues. Positions 348–378 (TNHLTPLPLLHKHTNNNNNINNNNNHNHNNI) are enriched in low complexity. Polar residues predominate over residues 379-393 (LGSPNQLNRSQDFTS). Low complexity-rich tracts occupy residues 394-408 (KNNNINNNNNNNNKI), 415-426 (NKGSPNQNSSEN), 641-693 (NNNS…NNNI), 709-731 (HHQQQLQHQQHQQQQLLHQQHQQ), and 770-793 (QQQQQQQQQQQHNNNNNNNNSNHN). Positions 738-789 (QQQLQIQYQQQQTHNNNLNQTQQLYYNHHHHQQQQQQQQQQQQHNNNNNNNN) form a coiled coil. Composition is skewed to polar residues over residues 794–818 (SVLTSPPLSQFPKTPLQLSQTPQHS) and 857–883 (SINSNSGMSLPMISSPSPNLSHMQKNR). 3 stretches are compositionally biased toward low complexity: residues 889-911 (ILNSSLSSSNTTNSATTSSSNSI), 1001-1031 (QNYNENNNNNNNNNNNNYNINNINNNNNNNF), and 1045-1063 (NINNNNNNNNNNNNNNNNN). Basic and acidic residues predominate over residues 1064–1078 (KNDKNESEFESKEKL). The segment covering 1081–1095 (PFGSSIPNIVNNEQL) has biased composition (polar residues). 3 stretches are compositionally biased toward low complexity: residues 1096–1116 (SPYSQQSLSSSSSENPSPQWS), 1123–1137 (TSSSKLSNSTSTLIN), and 1166–1177 (NFINNNSNNNNN). Residues 1179-1195 (EIDDDDEDGIDGIEGED) are compositionally biased toward acidic residues. The homeobox DNA-binding region spans 1198–1261 (KKRMRKTTRP…NRRTKDKLKN (64 aa)). Positions 1275–1294 (SSTSSTQTSTNSPSSQLSPL) are enriched in low complexity. Polar residues predominate over residues 1297–1316 (NMNNNDQQSISTPSLILSQI). Over residues 1317–1334 (NNNQNNNQNNNNNNNTNN) the composition is skewed to low complexity.

It localises to the nucleus. In terms of biological role, putative transcription factor. In Dictyostelium discoideum (Social amoeba), this protein is Homeobox protein 13 (hbx13).